The primary structure comprises 378 residues: Metacaspase-1B (378 aa).

The interval M1–A70 is disordered. The span at Q10–G29 shows a compositional bias: low complexity. Residues H169 and C225 contribute to the active site.

It belongs to the peptidase C14B family.

Its function is as follows. Involved in cell death (apoptosis). The polypeptide is Metacaspase-1B (casB) (Aspergillus terreus (strain NIH 2624 / FGSC A1156)).